Here is a 244-residue protein sequence, read N- to C-terminus: Mannose-binding protein C (244 aa).

The N-terminal stretch at 1-18 is a signal peptide; the sequence is MSIFTSFLLLCVVTVVYA. Residues 38-96 form the Collagen-like domain; sequence GLNGFPGKDGRDGAKGEKGEPGQGLRGLQGPPGKVGPTGPPGNPGLKGAVGPKGDRGDR. The interval 40 to 101 is disordered; sequence NGFPGKDGRD…DRGDRAEFDT (62 aa). Position 43 is a 4-hydroxyproline (proline 43). The span at 45–57 shows a compositional bias: basic and acidic residues; it reads KDGRDGAKGEKGE. 4-hydroxyproline is present on residues proline 58, proline 69, proline 78, and proline 81. A compositionally biased stretch (low complexity) spans 65–74; it reads LQGPPGKVGP. A compositionally biased stretch (basic and acidic residues) spans 90–99; sequence KGDRGDRAEF. A coiled-coil region spans residues 108-126; the sequence is IAALRSELRALRNWVLFSL. The region spanning 129–241 is the C-type lectin domain; sequence KVGKKYFVSS…CSDSFLAICE (113 aa). Cystine bridges form between cysteine 151-cysteine 240 and cysteine 218-cysteine 232. The N-linked (GlcNAc...) asparagine glycan is linked to asparagine 210.

Oligomeric complex of 3 or more homotrimers. Interacts with MASP1 and MASP2. Interacts with MEP1A and MEP1B and may inhibit their catalytic activity. Post-translationally, hydroxylation on proline residues within the sequence motif, GXPG, is most likely to be 4-hydroxy as this fits the requirement for 4-hydroxylation in vertebrates.

It localises to the secreted. In terms of biological role, calcium-dependent lectin involved in innate immune defense. Binds mannose, fucose and N-acetylglucosamine on different microorganisms and activates the lectin complement pathway. Binds to late apoptotic cells, as well as to apoptotic blebs and to necrotic cells, but not to early apoptotic cells, facilitating their uptake by macrophages. In Mus musculus (Mouse), this protein is Mannose-binding protein C (Mbl2).